The chain runs to 118 residues: Small ribosomal subunit protein uS13 (118 aa).

The disordered stretch occupies residues 91–118 (HRRGLPVRGQRTKTNARTRKGPRKPIKK).

It belongs to the universal ribosomal protein uS13 family. Part of the 30S ribosomal subunit. Forms a loose heterodimer with protein S19. Forms two bridges to the 50S subunit in the 70S ribosome.

In terms of biological role, located at the top of the head of the 30S subunit, it contacts several helices of the 16S rRNA. In the 70S ribosome it contacts the 23S rRNA (bridge B1a) and protein L5 of the 50S subunit (bridge B1b), connecting the 2 subunits; these bridges are implicated in subunit movement. Contacts the tRNAs in the A and P-sites. This Sodalis glossinidius (strain morsitans) protein is Small ribosomal subunit protein uS13.